The sequence spans 215 residues: Probable phosphoglycerate mutase GpmB (215 aa).

Substrate-binding positions include 8-15 (RHGETQWN), 21-22 (QG), arginine 58, arginine 60, 82-85 (ELDM), 104-105 (RR), and 151-152 (GI). Histidine 9 functions as the Tele-phosphohistidine intermediate in the catalytic mechanism. The Proton donor/acceptor role is filled by glutamate 82.

Belongs to the phosphoglycerate mutase family. GpmB subfamily.

The catalysed reaction is (2R)-2-phosphoglycerate = (2R)-3-phosphoglycerate. It functions in the pathway carbohydrate degradation; glycolysis; pyruvate from D-glyceraldehyde 3-phosphate: step 3/5. The protein is Probable phosphoglycerate mutase GpmB of Klebsiella pneumoniae subsp. pneumoniae (strain ATCC 700721 / MGH 78578).